A 348-amino-acid chain; its full sequence is Putative transport protein HI_0338 (348 aa).

A run of 9 helical transmembrane segments spans residues 7-27 (LHRT…VKLA), 28-48 (AEIV…SPII), 60-80 (LAIT…VGLI), 139-159 (VLLN…VVIF), 196-216 (VIGY…GVFI), 223-243 (VQYA…PNIG), 245-265 (IIAA…GIGF), 267-287 (VAIG…PKMM), and 296-316 (LVVF…GMLL).

This sequence belongs to the autoinducer-2 exporter (AI-2E) (TC 2.A.86) family.

The protein resides in the cell membrane. The chain is Putative transport protein HI_0338 from Haemophilus influenzae (strain ATCC 51907 / DSM 11121 / KW20 / Rd).